Here is a 270-residue protein sequence, read N- to C-terminus: tRNA pseudouridine synthase A (270 aa).

The active-site Nucleophile is the Asp60. The segment at 107-111 (FHARF) is RNA binding. Tyr118 is a binding site for substrate. The interaction with tRNA stretch occupies residues 168 to 172 (QCQSR).

The protein belongs to the tRNA pseudouridine synthase TruA family. Homodimer.

It catalyses the reaction uridine(38/39/40) in tRNA = pseudouridine(38/39/40) in tRNA. Formation of pseudouridine at positions 38, 39 and 40 in the anticodon stem and loop of transfer RNAs. This chain is tRNA pseudouridine synthase A, found in Shigella boydii serotype 4 (strain Sb227).